We begin with the raw amino-acid sequence, 46 residues long: MGIFNGIIEFLSNINFEVIAQLTMIAMIGIAGPMIIFLLAVRRGNL.

The residue at position 1 (Met-1) is an N-formylmethionine. Residues 1 to 20 are Lumenal-facing; the sequence is MGIFNGIIEFLSNINFEVIA. The chain crosses the membrane as a helical span at residues 21–38; it reads QLTMIAMIGIAGPMIIFL. Over 39-46 the chain is Cytoplasmic; the sequence is LAVRRGNL.

The protein belongs to the Psb30/Ycf12 family. As to quaternary structure, PSII is composed of 1 copy each of membrane proteins PsbA, PsbB, PsbC, PsbD, PsbE, PsbF, PsbH, PsbI, PsbJ, PsbK, PsbL, PsbM, PsbT, PsbX, PsbY, PsbZ, Psb30/Ycf12, peripheral proteins PsbO, CyanoQ (PsbQ), PsbU, PsbV and a large number of cofactors. It forms dimeric complexes. Part of a photosystem II (PSII) assembly intermediate complex PSII-I; crystallized from a strain deleted of psbJ, it forms monomeric PSII before addition of the oxygen evolving complex. PSII-I includes 3 assembly factors not found in mature PSII (Psb27, Psb28 and Psb34). The cofactor is PSII binds multiple chlorophylls, carotenoids and specific lipids..

Its subcellular location is the cellular thylakoid membrane. A core subunit of photosystem II (PSII). PSII is a light-driven water plastoquinone oxidoreductase, using light energy to abstract electrons from H(2)O, generating a proton gradient subsequently used for ATP formation. Helps stabilize PSII. This is Photosystem II reaction center protein Psb30 from Thermosynechococcus vestitus (strain NIES-2133 / IAM M-273 / BP-1).